A 493-amino-acid chain; its full sequence is GTPase Der (493 aa).

The region spanning 3–166 is the EngA-type G 1 domain; the sequence is PVIALVGRPN…EALGIFPKDN (164 aa). Residues 9–16, 56–60, and 118–121 contribute to the GTP site; these read GRPNVGKS, DTGGI, and NKVD. Acidic residues predominate over residues 167–184; it reads VEEEGEGEPASEEVAEGE. The tract at residues 167 to 195 is disordered; it reads VEEEGEGEPASEEVAEGEEPTRIPGPSEK. Residues 198-371 form the EngA-type G 2 domain; the sequence is IKIAIIGRPN…SVQESFRSAV (174 aa). Residues 204–211, 251–255, and 316–319 contribute to the GTP site; these read GRPNVGKS, DTAGV, and NKWD. Positions 372–456 constitute a KH-like domain; it reads TRWPTSRLTS…PIRIEYKGGE (85 aa). Over residues 454–463 the composition is skewed to basic and acidic residues; sequence GGENPYEGKK. The tract at residues 454-493 is disordered; that stretch reads GGENPYEGKKNSLTARQVNKKRRLMSHHKKAEKKKKDKRR. Basic residues predominate over residues 471 to 493; that stretch reads VNKKRRLMSHHKKAEKKKKDKRR.

It belongs to the TRAFAC class TrmE-Era-EngA-EngB-Septin-like GTPase superfamily. EngA (Der) GTPase family. In terms of assembly, associates with the 50S ribosomal subunit.

Its function is as follows. GTPase that plays an essential role in the late steps of ribosome biogenesis. The chain is GTPase Der from Pseudomonas aeruginosa (strain LESB58).